We begin with the raw amino-acid sequence, 219 residues long: Transcription factor MYB23 (219 aa).

2 consecutive HTH myb-type domains span residues 9-61 and 62-116; these read EHEY…MNYL and SPNV…SKKL. 2 DNA-binding regions (H-T-H motif) span residues 37–61 and 89–112; these read WNRI…MNYL and WSLI…NTHL.

Interacts with BHLH2/EGL3/MYC146, BHLH12/MYC1 and GL3. Expressed in roots, seed coats, leaves, stems and flowers. Detected specifically in trichomes, and in the cell division and differentiation zone of the root.

The protein localises to the nucleus. Functionally, transcription activator, when associated with BHLH2/EGL3/MYC146 or BHLH12/MYC1. Regulates the epidermal cell fate specification. Mediates the formation of columellae and accumulation of mucilages on seed coats. Controls the elongation of epidermal cells positively in roots but negatively in stems, leading to the promotion of primary roots elongation and repression of leaves and stems elongation, respectively. Ovoids ectopic root-hair formation, probably by inducing GL2 in roots. Controls trichome initiation and branching. This chain is Transcription factor MYB23 (MYB23), found in Arabidopsis thaliana (Mouse-ear cress).